A 454-amino-acid polypeptide reads, in one-letter code: 3-phosphoshikimate 1-carboxyvinyltransferase (454 aa).

K39, S40, and R44 together coordinate 3-phosphoshikimate. Residue K39 participates in phosphoenolpyruvate binding. The phosphoenolpyruvate site is built by G112 and R140. 4 residues coordinate 3-phosphoshikimate: S185, Q187, D333, and K360. Q187 serves as a coordination point for phosphoenolpyruvate. Catalysis depends on D333, which acts as the Proton acceptor. Residues R364 and R405 each coordinate phosphoenolpyruvate.

The protein belongs to the EPSP synthase family. In terms of assembly, monomer.

The protein localises to the cytoplasm. It catalyses the reaction 3-phosphoshikimate + phosphoenolpyruvate = 5-O-(1-carboxyvinyl)-3-phosphoshikimate + phosphate. It functions in the pathway metabolic intermediate biosynthesis; chorismate biosynthesis; chorismate from D-erythrose 4-phosphate and phosphoenolpyruvate: step 6/7. Functionally, catalyzes the transfer of the enolpyruvyl moiety of phosphoenolpyruvate (PEP) to the 5-hydroxyl of shikimate-3-phosphate (S3P) to produce enolpyruvyl shikimate-3-phosphate and inorganic phosphate. This chain is 3-phosphoshikimate 1-carboxyvinyltransferase, found in Xylella fastidiosa (strain Temecula1 / ATCC 700964).